Here is a 185-residue protein sequence, read N- to C-terminus: Ribonuclease M5 1 (185 aa).

Positions 4 to 87 constitute a Toprim domain; that stretch reads KEVIVVEGKD…AFLTKHDAAP (84 aa). Positions 10, 56, and 58 each coordinate Mg(2+).

It belongs to the ribonuclease M5 family. It depends on Mg(2+) as a cofactor.

It is found in the cytoplasm. It catalyses the reaction Endonucleolytic cleavage of RNA, removing 21 and 42 nucleotides, respectively, from the 5'- and 3'-termini of a 5S-rRNA precursor.. Its function is as follows. Required for correct processing of both the 5' and 3' ends of 5S rRNA precursor. Cleaves both sides of a double-stranded region yielding mature 5S rRNA in one step. This Ligilactobacillus salivarius (strain UCC118) (Lactobacillus salivarius) protein is Ribonuclease M5 1.